Reading from the N-terminus, the 64-residue chain is SPbeta prophage-derived uncharacterized protein YoqI (64 aa).

This Bacillus subtilis (strain 168) protein is SPbeta prophage-derived uncharacterized protein YoqI (yoqI).